Reading from the N-terminus, the 435-residue chain is GPI-anchor transamidase component PIGU (435 aa).

The Cytoplasmic portion of the chain corresponds to 1 to 3 (MAA). Residues 4-22 (PLALVLVVAVTVRAALFRS) traverse the membrane as a helical segment. Topologically, residues 23 to 78 (SLAEFISERVEVVSPLSSWKRVVEGLSLLDLGVSPYSGAVFHETPLIIYLFHFLID) are lumenal. Residues 79-99 (YAELVFMITDALTAIALYFAI) form a helical membrane-spanning segment. At 100–136 (QDFNKVVFKKQKLLLELDQYAPDVAELIRTPMEMRYI) the chain is on the cytoplasmic side. Transmembrane regions (helical) follow at residues 137-158 (PLKVALFYLLNPYTILSCVAKS), 159-178 (TCAINNTLIAFFILTTIKGS), 179-194 (VFLSAIFLALATYQTL), and 195-205 (YPVTLFAPGLL). At 206–222 (YLLQRQYIPVKVKSKAF) the chain is on the cytoplasmic side. Lys-216 is an a cardiolipin binding site. The chain crosses the membrane as a helical span at residues 223 to 244 (WIFSWEYAMMYIGSLVVIVCLS). Residues 245 to 286 (FFLLSSWDFIPAVYGFILSVPDLTPNIGLFWYFFAEMFEHFS) lie on the Lumenal side of the membrane. A helical transmembrane segment spans residues 287–306 (LFFVCVFQINVFFYTVPLAI). The Cytoplasmic portion of the chain corresponds to 307–311 (KLKEH). An a cardiolipin-binding site is contributed by Lys-309. 2 helical membrane passes run 312–331 (PIFFMFIQIAIISIFKSYPT) and 332–345 (VGDVALYMAFFPVW). Topologically, residues 346–354 (NHLYRFLRN) are cytoplasmic. A helical membrane pass occupies residues 355-372 (VFVLTCIIVVCSLLFPVL). Residues 373-384 (WHLWIYAGSANS) lie on the Lumenal side of the membrane. A 2-acyl-6-[6-phosphoethanolamine-alpha-D-mannosyl-(1-&gt;2)-6-phosphoethanolamine-alpha-D-mannosyl-(1-&gt;6)-2-phosphoethanolamine-alpha-D-mannosyl-(1-&gt;4)-alpha-D-glucosaminyl]-1-(1-radyl,2-acyl-sn-glycero-3-phospho)-1D-myo-inositol-binding residues include Asn-383 and Asn-385. The chain crosses the membrane as a helical span at residues 385–406 (NFFYAITLTFNVGQILLISDYF). Residues 407 to 435 (YAFLRREYYLTHGLYLTAKDGTEAMLVLK) lie on the Cytoplasmic side of the membrane.

It belongs to the PIGU family. Heteropentamer. Part of the GPI-anchor transamidase complex, consisting of PIGK, PIGT, PIGS, PIGU and GAA1.

Its subcellular location is the endoplasmic reticulum membrane. Its pathway is glycolipid biosynthesis; glycosylphosphatidylinositol-anchor biosynthesis. Component of the glycosylphosphatidylinositol-anchor (GPI-anchor) transamidase (GPI-T) complex that catalyzes the formation of the linkage between a proprotein and a GPI-anchor and participates in GPI anchored protein biosynthesis. Binds the lipid portion of GPI-anchor. May act as an organizer in the transmembrane layer to recruit other subunits, and thus is essential for assembly of the complex. The protein is GPI-anchor transamidase component PIGU of Cricetulus griseus (Chinese hamster).